We begin with the raw amino-acid sequence, 373 residues long: Mannan endo-1,4-beta-mannosidase A (373 aa).

A signal peptide spans 1–17; that stretch reads MKGLFAFGLGLLSLVNA. Residues tryptophan 81, asparagine 193, and 194–196 each bind substrate; that span reads EPR. Glutamate 194 functions as the Proton donor/acceptor in the catalytic mechanism. Cysteine 197 and cysteine 200 are oxidised to a cystine. Substrate is bound by residues glutamate 230, tyrosine 267, and tryptophan 271. An intrachain disulfide couples cysteine 289 to cysteine 296. Glutamate 300 acts as the Nucleophile in catalysis. A disulfide bridge links cysteine 308 with cysteine 359. Tryptophan 332 serves as a coordination point for substrate.

Belongs to the glycosyl hydrolase 5 (cellulase A) family. As to quaternary structure, monomer. Post-translationally, not glycosylated.

The protein localises to the secreted. The enzyme catalyses Random hydrolysis of (1-&gt;4)-beta-D-mannosidic linkages in mannans, galactomannans and glucomannans.. Its function is as follows. Endo-1,4-mannanase that catalyzes the random hydrolysis of (1-&gt;4)-beta-D-mannosidic linkages in mannans and heteromannans. It is a crucial enzyme for depolymerization of seed galactomannans and wood galactoglucomannans. Hydrolyzes structurally different mannan polysaccharides, such as galactomannans, glucomannans, and beta-1,4-mannans from different sources, yielding principally mannobiose. Also has transglycosylation activity. The polypeptide is Mannan endo-1,4-beta-mannosidase A (Podospora anserina (strain S / ATCC MYA-4624 / DSM 980 / FGSC 10383) (Pleurage anserina)).